Consider the following 302-residue polypeptide: Sulfate adenylyltransferase subunit 2 (302 aa).

This sequence belongs to the PAPS reductase family. CysD subfamily. As to quaternary structure, heterodimer composed of CysD, the smaller subunit, and CysN.

The enzyme catalyses sulfate + ATP + H(+) = adenosine 5'-phosphosulfate + diphosphate. It participates in sulfur metabolism; hydrogen sulfide biosynthesis; sulfite from sulfate: step 1/3. With CysN forms the ATP sulfurylase (ATPS) that catalyzes the adenylation of sulfate producing adenosine 5'-phosphosulfate (APS) and diphosphate, the first enzymatic step in sulfur assimilation pathway. APS synthesis involves the formation of a high-energy phosphoric-sulfuric acid anhydride bond driven by GTP hydrolysis by CysN coupled to ATP hydrolysis by CysD. In Escherichia coli O1:K1 / APEC, this protein is Sulfate adenylyltransferase subunit 2.